We begin with the raw amino-acid sequence, 330 residues long: ADP-L-glycero-D-manno-heptose-6-epimerase (330 aa).

NADP(+) contacts are provided by residues 11-12, 32-33, lysine 39, lysine 54, 75-79, and asparagine 92; these read FI, DN, and EGACS. The Proton acceptor role is filled by tyrosine 139. Lysine 143 is an NADP(+) binding site. Asparagine 168 is a substrate binding site. NADP(+) contacts are provided by valine 169 and lysine 177. Lysine 177 serves as the catalytic Proton acceptor. Substrate is bound by residues arginine 179, histidine 186, 200–203, arginine 213, and tyrosine 292; that span reads FGEY.

Belongs to the NAD(P)-dependent epimerase/dehydratase family. HldD subfamily. Homopentamer. NADP(+) serves as cofactor.

It carries out the reaction ADP-D-glycero-beta-D-manno-heptose = ADP-L-glycero-beta-D-manno-heptose. It participates in nucleotide-sugar biosynthesis; ADP-L-glycero-beta-D-manno-heptose biosynthesis; ADP-L-glycero-beta-D-manno-heptose from D-glycero-beta-D-manno-heptose 7-phosphate: step 4/4. Functionally, catalyzes the interconversion between ADP-D-glycero-beta-D-manno-heptose and ADP-L-glycero-beta-D-manno-heptose via an epimerization at carbon 6 of the heptose. This is ADP-L-glycero-D-manno-heptose-6-epimerase from Burkholderia mallei (strain NCTC 10247).